Consider the following 239-residue polypeptide: LexA repressor (239 aa).

The segment at residues 27–47 (FDEMKDALDLASKSGIHRLIT) is a DNA-binding region (H-T-H motif). Residues Ser-159 and Lys-197 each act as for autocatalytic cleavage activity in the active site.

Belongs to the peptidase S24 family. Homodimer.

The catalysed reaction is Hydrolysis of Ala-|-Gly bond in repressor LexA.. In terms of biological role, represses a number of genes involved in the response to DNA damage (SOS response), including recA and lexA. In the presence of single-stranded DNA, RecA interacts with LexA causing an autocatalytic cleavage which disrupts the DNA-binding part of LexA, leading to derepression of the SOS regulon and eventually DNA repair. This chain is LexA repressor, found in Rhizobium radiobacter (Agrobacterium tumefaciens).